A 258-amino-acid chain; its full sequence is Protein STAY-GREEN LIKE, chloroplastic (258 aa).

It belongs to the staygreen family. Strongly expressed in leaves, stems and panicles, and at lower levels in roots and seeds.

Promotes chlorophyll degradation in leaves. May be involved in LHCI proteins degradation, regulating the balance between LHCI and LHCII. This Oryza sativa subsp. japonica (Rice) protein is Protein STAY-GREEN LIKE, chloroplastic.